A 97-amino-acid chain; its full sequence is Stefin-1 (97 aa).

Residues 46-50 carry the Secondary area of contact motif; it reads QVVAG.

The protein belongs to the cystatin family.

The protein resides in the cytoplasm. This is an intracellular thiol proteinase inhibitor. The polypeptide is Stefin-1 (Stfa1) (Mus musculus (Mouse)).